The sequence spans 588 residues: MARPIDVSQLIAGINKKKGLDENTSGKISKPRFLNKQERSKQERLKENEESLTPTQSDSAKVEIKKVNSRDDSFFNETNDKKRNPSKQNGSKFHFSWNESEDTLSGYDPIVSTRAIDLLWKGKTPKNAAESSYMGKHWTEKSLHEMNERDWRILKEDYAIVTKGGTVENPLRNWEELNIIPRDLLRVIIQELRFPSPTPIQRITIPNVCNMKQYRDFLGVASTGSGKTLAFVIPILIKMSRSPPRPPSLKIIDGPKALILAPTRELVQQIQKETQKVTKIWSKESNYDCKVISIVGGHSLEEISFSLSEGCDILVATPGRLIDSLENHLLVMKQVETLVLDEADKMIDLGFEDQVTNILTKVDINADSAVNRQTLMFTATMTPVIEKIAAGYMQKPVYATIGVETGSEPLIQQVVEYADNDEDKFKKLKPIVAKYDPPIIIFINYKQTADWLAEKFQKETNMKVTILHGSKSQEQREHSLQLFRTNKVQIMIATNVAARGLDIPNVSLVVNFQISKKMDDYIHRIGRTGRAANEGTAVSFVSAAEDESLIRELYKYVRKHDPLNSNIFSEAVKNKYNVGKQLSNEIIY.

Positions 15-94 (NKKKGLDENT…PSKQNGSKFH (80 aa)) are disordered. Basic and acidic residues-rich tracts occupy residues 35-49 (NKQE…KENE) and 60-83 (AKVE…DKKR). The residue at position 69 (Ser-69) is a Phosphoserine. The short motif at 172–202 (RNWEELNIIPRDLLRVIIQELRFPSPTPIQR) is the Q motif element. In terms of domain architecture, Helicase ATP-binding spans 208–399 (VCNMKQYRDF…AGYMQKPVYA (192 aa)). 221–228 (ASTGSGKT) lines the ATP pocket. The DEAD box signature appears at 341-344 (DEAD). One can recognise a Helicase C-terminal domain in the interval 427 to 579 (KLKPIVAKYD…EAVKNKYNVG (153 aa)).

The protein belongs to the DEAD box helicase family. DDX23/PRP28 subfamily. Component of the U5 snRNP complex, composed of at least BRR2, PRP8, PRP28, DIB1, LIN1, SMB1, SMD1, SMD2, SMD3, SME1, SMX2, SMX3, and SNU114, associated with the U5 snRNA.

Its subcellular location is the cytoplasm. The protein resides in the nucleus. The enzyme catalyses ATP + H2O = ADP + phosphate + H(+). Its function is as follows. ATP-dependent RNA helicase involved in mRNA splicing. May destabilize the U1/5'-splice site duplex to permit an effective competition for the 5'-splice site by the U6 snRNA, resulting in the switch between U1 and U6 at the 5'-splice site. May also act to unwind the U4/U6 base-pairing interaction in the U4/U6/U5 snRNP, facilitating the first covalent step of splicing. This chain is Pre-mRNA-splicing ATP-dependent RNA helicase PRP28 (PRP28), found in Saccharomyces cerevisiae (strain ATCC 204508 / S288c) (Baker's yeast).